Consider the following 719-residue polypeptide: Probable 1-deoxy-D-xylulose-5-phosphate synthase, chloroplastic (719 aa).

A chloroplast-targeting transit peptide spans 1–57 (MALCAYAFPGILNRTVAVASDASKPTPLFSEWIHGTDLQFQFHQKLTQVKKRSRTVQ). Thiamine diphosphate-binding positions include His-145 and 186 to 188 (GHS). Asp-217 serves as a coordination point for Mg(2+). Thiamine diphosphate is bound by residues 218 to 219 (GA), Asn-246, Tyr-367, and Glu-449. Asn-246 provides a ligand contact to Mg(2+).

It belongs to the transketolase family. DXPS subfamily. Homodimer. Requires Mg(2+) as cofactor. The cofactor is thiamine diphosphate.

It is found in the plastid. The protein resides in the chloroplast. The catalysed reaction is D-glyceraldehyde 3-phosphate + pyruvate + H(+) = 1-deoxy-D-xylulose 5-phosphate + CO2. Its pathway is metabolic intermediate biosynthesis; 1-deoxy-D-xylulose 5-phosphate biosynthesis; 1-deoxy-D-xylulose 5-phosphate from D-glyceraldehyde 3-phosphate and pyruvate: step 1/1. Its function is as follows. Catalyzes the acyloin condensation reaction between C atoms 2 and 3 of pyruvate and glyceraldehyde 3-phosphate to yield 1-deoxy-D-xylulose-5-phosphate (DXP). This is Probable 1-deoxy-D-xylulose-5-phosphate synthase, chloroplastic (TKT2) from Capsicum annuum (Capsicum pepper).